The primary structure comprises 171 residues: Transcription antitermination protein NusB (171 aa).

Belongs to the NusB family.

In terms of biological role, involved in transcription antitermination. Required for transcription of ribosomal RNA (rRNA) genes. Binds specifically to the boxA antiterminator sequence of the ribosomal RNA (rrn) operons. The chain is Transcription antitermination protein NusB from Brucella ovis (strain ATCC 25840 / 63/290 / NCTC 10512).